The chain runs to 151 residues: UPF0208 membrane protein YfbV (151 aa).

The next 2 helical transmembrane spans lie at 46–65 (YAIR…QIAL) and 69–91 (LGPA…WWLG).

This sequence belongs to the UPF0208 family.

It is found in the cell inner membrane. The polypeptide is UPF0208 membrane protein YfbV (Shigella boydii serotype 18 (strain CDC 3083-94 / BS512)).